The primary structure comprises 152 residues: 6,7-dimethyl-8-ribityllumazine synthase (152 aa).

5-amino-6-(D-ribitylamino)uracil is bound by residues Phe-21, 55–57, and 79–81; these read AFE and CVI. 84-85 serves as a coordination point for (2S)-2-hydroxy-3-oxobutyl phosphate; sequence AT. His-87 acts as the Proton donor in catalysis. A 5-amino-6-(D-ribitylamino)uracil-binding site is contributed by Phe-112. Arg-126 contacts (2S)-2-hydroxy-3-oxobutyl phosphate.

It belongs to the DMRL synthase family. As to quaternary structure, forms an icosahedral capsid composed of 60 subunits, arranged as a dodecamer of pentamers.

The enzyme catalyses (2S)-2-hydroxy-3-oxobutyl phosphate + 5-amino-6-(D-ribitylamino)uracil = 6,7-dimethyl-8-(1-D-ribityl)lumazine + phosphate + 2 H2O + H(+). The protein operates within cofactor biosynthesis; riboflavin biosynthesis; riboflavin from 2-hydroxy-3-oxobutyl phosphate and 5-amino-6-(D-ribitylamino)uracil: step 1/2. Its function is as follows. Catalyzes the formation of 6,7-dimethyl-8-ribityllumazine by condensation of 5-amino-6-(D-ribitylamino)uracil with 3,4-dihydroxy-2-butanone 4-phosphate. This is the penultimate step in the biosynthesis of riboflavin. The sequence is that of 6,7-dimethyl-8-ribityllumazine synthase from Staphylococcus carnosus (strain TM300).